Reading from the N-terminus, the 340-residue chain is GTPase Obg (340 aa).

Residues 1–159 (MKFLDQAKVY…RTLWLRLKLI (159 aa)) enclose the Obg domain. Residues 160–327 (ADAGIIGLPN…LLRAGAHIIE (168 aa)) enclose the OBG-type G domain. Residues 166–173 (GLPNAGKS), 191–195 (FTTLY), 212–215 (DIPG), 279–282 (SQID), and 308–310 (SAV) contribute to the GTP site. The Mg(2+) site is built by Ser173 and Thr193.

It belongs to the TRAFAC class OBG-HflX-like GTPase superfamily. OBG GTPase family. As to quaternary structure, monomer. Mg(2+) serves as cofactor.

Its subcellular location is the cytoplasm. Functionally, an essential GTPase which binds GTP, GDP and possibly (p)ppGpp with moderate affinity, with high nucleotide exchange rates and a fairly low GTP hydrolysis rate. Plays a role in control of the cell cycle, stress response, ribosome biogenesis and in those bacteria that undergo differentiation, in morphogenesis control. This is GTPase Obg from Bartonella henselae (strain ATCC 49882 / DSM 28221 / CCUG 30454 / Houston 1) (Rochalimaea henselae).